Reading from the N-terminus, the 629-residue chain is tRNA uridine 5-carboxymethylaminomethyl modification enzyme MnmG (629 aa).

11 to 16 (GGGHAG) is a binding site for FAD. NAD(+) is bound at residue 273 to 287 (GPRYCPSFEDKAVRF).

This sequence belongs to the MnmG family. Homodimer. Heterotetramer of two MnmE and two MnmG subunits. FAD is required as a cofactor.

The protein localises to the cytoplasm. In terms of biological role, NAD-binding protein involved in the addition of a carboxymethylaminomethyl (cmnm) group at the wobble position (U34) of certain tRNAs, forming tRNA-cmnm(5)s(2)U34. This chain is tRNA uridine 5-carboxymethylaminomethyl modification enzyme MnmG, found in Mycoplasma mycoides subsp. mycoides SC (strain CCUG 32753 / NCTC 10114 / PG1).